The primary structure comprises 717 residues: Delta-like protein D (717 aa).

Residues 1–19 form the signal peptide; sequence MGRLMIAVLLCVMISQGFC. Topologically, residues 20-547 are extracellular; the sequence is SGVFELKLQE…EEDDGGFPWT (528 aa). Residues 175–219 form the DSL domain; sequence FVCDEHYYGEGCSVFCRPRDDTFGHFTCGERGEIICNSGWKGQYC. Intrachain disulfides connect C177-C186, C190-C202, C210-C219, C224-C235, C228-C241, C243-C252, C261-C266, C274-C283, C290-C302, C296-C312, C314-C323, C330-C341, C335-C350, C352-C361, C368-C379, C373-C389, C391-C400, C407-C418, C412-C427, C429-C438, C445-C456, C450-C465, C467-C476, C483-C494, C488-C503, and C505-C514. EGF-like domains are found at residues 220-253, 257-284, and 286-324; these read TEPICLPGCDEDHGFCDKPGECKCRVGFSGKYCD, RYPGCLHGTCQQPWQCNCQEGWGGLFCN, and DLNYCTHHKPCQNGATCTNTGQGSYTCSCRPGFTGDSCE. One can recognise an EGF-like 4; calcium-binding domain in the interval 326-362; that stretch reads EVNECSGSPCRNGGSCTDLENTYSCTCPPGFYGRNCE. 2 EGF-like domains span residues 364-401 and 403-439; these read SAMTCADGPCFNGGHCADNPEGGYFCQCPMGYAGFNCE and KIDHCSSNPCSNDAQCLDLVDSYLCQCPEGFTGTHCE. The 37-residue stretch at 441–477 folds into the EGF-like 7; calcium-binding domain; that stretch reads NIDECATYPCQNGGTCQDGLSDYTCTCPPGYTGKNCT. N475 carries an N-linked (GlcNAc...) asparagine glycan. The region spanning 479–515 is the EGF-like 8 domain; the sequence is AVNKCLHNPCHNGATCHEMDNRYVCACIPGYGGRNCQ. A helical membrane pass occupies residues 548–568; sequence AVCAGIILVLLVLIGGSVFVI. Residues 569–717 are Cytoplasmic-facing; sequence YIRLKLQQRS…KDECIIATEV (149 aa). Residues 649–693 are disordered; the sequence is EDLGKEDSERSEATKCEPLDSDSEEKHRNHLKSDSSERKRTESLC.

Interacts with mib. In terms of processing, ubiquitinated by mib, leading to its endocytosis and subsequent degradation. In terms of tissue distribution, expressed in both mesodermal and neuroectodermal regions. In the developing nervous system, it is expressed in overlapping regions with deltaB (dlb) and deltaA (dla); in the neural plate, dld is expressed in patches of contiguous cells with dla, while dlb is confined to scattered cells within those patches that will differentiate as neurons. In somites, it marks the anterior part of each formed somite, while deltaC (dlc) marks the posterior part. In 24 hours embryos, expressed in the hindbrain in stripes adjacent to rhombomere boundaries, but not in the actual boundary cells.

It is found in the membrane. In terms of biological role, acts as a ligand for Notch receptors and is involved in primary neurogenesis and somitogenesis. Can activate Notch receptors, thereby playing a key role in lateral inhibition, a process that prevents the immediate neighbors of each nascent neural cell from simultaneously embarking on neural differentiation. Required in somite segmentation to keep the oscillations of neighboring presomitic mesoderm cells synchronized. This Danio rerio (Zebrafish) protein is Delta-like protein D (dld).